The chain runs to 263 residues: Endonuclease 8 (263 aa).

The active-site Schiff-base intermediate with DNA is the P2. Catalysis depends on E3, which acts as the Proton donor. The active-site Proton donor; for beta-elimination activity is K53. Residues Q70, R125, and N169 each coordinate DNA. The FPG-type zinc finger occupies 229-263; the sequence is KVFHRDGERCERCGGVIEKTTLSSRPFYWCPGCQH. The active-site Proton donor; for delta-elimination activity is R253.

Belongs to the FPG family. Zn(2+) is required as a cofactor.

The enzyme catalyses 2'-deoxyribonucleotide-(2'-deoxyribose 5'-phosphate)-2'-deoxyribonucleotide-DNA = a 3'-end 2'-deoxyribonucleotide-(2,3-dehydro-2,3-deoxyribose 5'-phosphate)-DNA + a 5'-end 5'-phospho-2'-deoxyribonucleoside-DNA + H(+). Functionally, involved in base excision repair of DNA damaged by oxidation or by mutagenic agents. Acts as a DNA glycosylase that recognizes and removes damaged bases. Has a preference for oxidized pyrimidines, such as thymine glycol, 5,6-dihydrouracil and 5,6-dihydrothymine. Has AP (apurinic/apyrimidinic) lyase activity and introduces nicks in the DNA strand. Cleaves the DNA backbone by beta-delta elimination to generate a single-strand break at the site of the removed base with both 3'- and 5'-phosphates. The chain is Endonuclease 8 from Klebsiella pneumoniae (strain 342).